The following is a 478-amino-acid chain: Protein trichome birefringence-like 20 (478 aa).

Residues 10–30 (IGLVIFPLILLTIAPILYLFF) form a helical; Signal-anchor for type II membrane protein membrane-spanning segment. The span at 50–68 (SSAISSPSRYNHSSSSSDS) shows a compositional bias: low complexity. Positions 50–125 (SSAISSPSRY…KEHRRKKRKR (76 aa)) are disordered. Over residues 92–110 (SSSLHNNDRLSISSSNGHH) the composition is skewed to polar residues. Over residues 112 to 125 (VTPKKEHRRKKRKR) the composition is skewed to basic residues. The GDS motif motif lies at 200–202 (GDS). Residues 447 to 461 (DCVHWCLPGPIDSWN) carry the DCXHWCLPGXXDXWN motif motif.

Belongs to the PC-esterase family. TBL subfamily.

The protein resides in the membrane. Functionally, may act as a bridging protein that binds pectin and other cell wall polysaccharides. Probably involved in maintaining esterification of pectins. May be involved in the specific O-acetylation of cell wall polymers. The polypeptide is Protein trichome birefringence-like 20 (TBL20) (Arabidopsis thaliana (Mouse-ear cress)).